A 101-amino-acid polypeptide reads, in one-letter code: Putative pterin-4-alpha-carbinolamine dehydratase (101 aa).

Belongs to the pterin-4-alpha-carbinolamine dehydratase family.

It catalyses the reaction (4aS,6R)-4a-hydroxy-L-erythro-5,6,7,8-tetrahydrobiopterin = (6R)-L-erythro-6,7-dihydrobiopterin + H2O. This chain is Putative pterin-4-alpha-carbinolamine dehydratase, found in Nitrobacter hamburgensis (strain DSM 10229 / NCIMB 13809 / X14).